A 110-amino-acid chain; its full sequence is UPF0060 membrane protein MMAR_2961 (110 aa).

Helical transmembrane passes span 6–26, 32–52, 61–81, and 90–110; these read ILLFIVAAVAEIGGAWLVWQG, GLAWIGAGVIALGLYGFVATL, ILAAYGGIFVAGSLLWGMAFD, and IVGALVCLAGVGVIMYAPRAH.

This sequence belongs to the UPF0060 family.

The protein localises to the cell membrane. This chain is UPF0060 membrane protein MMAR_2961, found in Mycobacterium marinum (strain ATCC BAA-535 / M).